The following is a 445-amino-acid chain: Methionine aminopeptidase 2-2 (445 aa).

Residues 1-92 form a disordered region; that stretch reads MAAQASEDLK…RVPISQLFPN (92 aa). A compositionally biased stretch (low complexity) spans 18–33; the sequence is AGDSKAAAATAGQAEA. A compositionally biased stretch (acidic residues) spans 34 to 46; it reads GEAEDDSDDDEVD. Over residues 47-58 the composition is skewed to low complexity; the sequence is GNAAPEGAASGA. A compositionally biased stretch (basic residues) spans 59–74; it reads AKKKKKRKPKKKKKGG. Histidine 198 contacts substrate. Aspartate 218, aspartate 229, and histidine 298 together coordinate a divalent metal cation. Histidine 306 is a binding site for substrate. Residues glutamate 331 and glutamate 426 each coordinate a divalent metal cation.

The protein belongs to the peptidase M24A family. Methionine aminopeptidase eukaryotic type 2 subfamily. It depends on Co(2+) as a cofactor. Requires Zn(2+) as cofactor. The cofactor is Mn(2+). Fe(2+) is required as a cofactor.

The protein resides in the cytoplasm. The enzyme catalyses Release of N-terminal amino acids, preferentially methionine, from peptides and arylamides.. Functionally, cotranslationally removes the N-terminal methionine from nascent proteins. The N-terminal methionine is often cleaved when the second residue in the primary sequence is small and uncharged (Met-Ala-, Cys, Gly, Pro, Ser, Thr, or Val). This is Methionine aminopeptidase 2-2 from Aspergillus terreus (strain NIH 2624 / FGSC A1156).